Reading from the N-terminus, the 170-residue chain is Photosystem I assembly protein Ycf3 (170 aa).

TPR repeat units follow at residues 35-68, 72-105, and 120-153; these read AFTH…EIDP, SYIL…NSSL, and GEQA…APSN.

The protein belongs to the Ycf3 family.

It localises to the plastid. The protein localises to the chloroplast thylakoid membrane. In terms of biological role, essential for the assembly of the photosystem I (PSI) complex. May act as a chaperone-like factor to guide the assembly of the PSI subunits. The polypeptide is Photosystem I assembly protein Ycf3 (Anthoceros angustus (Hornwort)).